A 208-amino-acid chain; its full sequence is Small ribosomal subunit protein uS4 (208 aa).

In terms of domain architecture, S4 RNA-binding spans 98 to 163 (QRLDNVVYRM…NPQITRAIEL (66 aa)).

This sequence belongs to the universal ribosomal protein uS4 family. As to quaternary structure, part of the 30S ribosomal subunit. Contacts protein S5. The interaction surface between S4 and S5 is involved in control of translational fidelity.

One of the primary rRNA binding proteins, it binds directly to 16S rRNA where it nucleates assembly of the body of the 30S subunit. Its function is as follows. With S5 and S12 plays an important role in translational accuracy. The protein is Small ribosomal subunit protein uS4 of Campylobacter jejuni (strain RM1221).